The sequence spans 206 residues: Triafestin-1 (206 aa).

Positions 1 to 18 (MKTILAVIFFGILAFAFA) are cleaved as a signal peptide. Residue asparagine 55 is glycosylated (N-linked (GlcNAc...) asparagine).

Belongs to the calycin superfamily. Triabin family. Interacts with host coagulation factor XII (F12) (inactive and activated) (via amino acids 1-77). Interacts with host high molecular weight kininogen (KNG1) (via amino acids 402-532). As to expression, salivary gland (at protein level).

It is found in the secreted. Its activity is regulated as follows. Zn(2+) modulates binding to host coagulation factor XII (F12) and high molecular weight kininogen (KNG1). Suppresses activation of the host plasma kallikrein-kinin system, leading to inhibition of the intrinsic coagulation pathway. Blocks host coagulation factor XII (F12) and prekallikrein (KLKB1) reciprocal activation without affecting their amidolytic activities. Blocks binding of host F12 and high molecular weight kininogen (KNG1) to negatively charged surfaces. Attenuates generation of bradykinin by interfering with activation of host kallikrein-kinin system. In Triatoma infestans (Assassin bug), this protein is Triafestin-1.